The sequence spans 214 residues: Large ribosomal subunit protein uL16 (214 aa).

This sequence belongs to the universal ribosomal protein uL16 family. As to quaternary structure, component of the large ribosomal subunit. Mature ribosomes consist of a small (40S) and a large (60S) subunit. The 40S subunit contains about 33 different proteins and 1 molecule of RNA (18S). The 60S subunit contains about 49 different proteins and 3 molecules of RNA (28S, 5.8S and 5S).

In Caenorhabditis elegans, this protein is Large ribosomal subunit protein uL16 (rpl-10L).